Here is an 826-residue protein sequence, read N- to C-terminus: Zinc phosphodiesterase ELAC protein 2 (826 aa).

The transit peptide at 1 to 16 (MWALCSLLRSATGRTM) directs the protein to the mitochondrion. Positions 15–27 (TMSQGRTISQGSA) are enriched in polar residues. Disordered regions lie at residues 15 to 53 (TMSQ…GSSG) and 187 to 231 (SEQR…VSQR). Ser-199, Ser-208, Ser-212, Ser-229, Ser-618, and Ser-736 each carry phosphoserine. Positions 208–224 (SPERSSDSESNESEPHL) are enriched in basic and acidic residues. Positions 798–826 (ALTDDLEDGEPQQKRAHTEEPQSKKVRAQ) are disordered. A compositionally biased stretch (basic and acidic residues) spans 808 to 820 (PQQKRAHTEEPQS).

The protein belongs to the RNase Z family. As to quaternary structure, homodimer. Interacts with PTCD1. Requires Zn(2+) as cofactor.

It localises to the mitochondrion. Its subcellular location is the mitochondrion matrix. It is found in the mitochondrion nucleoid. The protein resides in the nucleus. It catalyses the reaction Endonucleolytic cleavage of RNA, removing extra 3' nucleotides from tRNA precursor, generating 3' termini of tRNAs. A 3'-hydroxy group is left at the tRNA terminus and a 5'-phosphoryl group is left at the trailer molecule.. Its function is as follows. Zinc phosphodiesterase, which displays mitochondrial tRNA 3'-processing endonuclease activity. Involved in tRNA maturation, by removing a 3'-trailer from precursor tRNA. Associates with mitochondrial DNA complexes at the nucleoids to initiate RNA processing and ribosome assembly. In Macaca fascicularis (Crab-eating macaque), this protein is Zinc phosphodiesterase ELAC protein 2 (ELAC2).